Consider the following 151-residue polypeptide: Neuroglobin (151 aa).

In terms of domain architecture, Globin spans 1 to 149; sequence MERPEQELIR…VVQAMSRGWD (149 aa). Residues His-64 and His-96 each contribute to the heme b site.

The protein belongs to the globin family. Monomer. Homodimer and homotetramer; disulfide-linked. Mainly monomeric but also detected as part of homodimers and homotetramers. Interacts with 14-3-3 proteins; regulates the phosphorylation of NGB. Could interact (ferrous form) with G-alpha(i) proteins (GTP-bound form). In terms of processing, phosphorylated during hypoxia by ERK1/ERK2. Phosphorylation regulates the heme pocket hexacoordination preventing the association of His-64 with the heme metal center. Thereby, promotes the access of dioxygen and nitrite to the heme and stimulates the nitrite reductase activity. Phosphorylation during hypoxia is stabilized by 14-3-3 proteins.

The protein resides in the cytoplasm. It localises to the cytosol. The protein localises to the mitochondrion matrix. It carries out the reaction Fe(III)-heme b-[protein] + nitric oxide + H2O = Fe(II)-heme b-[protein] + nitrite + 2 H(+). In terms of biological role, monomeric globin with a bis-histidyl six-coordinate heme-iron atom through which it can bind dioxygen, carbon monoxide and nitric oxide. Could help transport oxygen and increase its availability to the metabolically active neuronal tissues, though its low quantity in tissues as well as its high affinity for dioxygen, which may limit its oxygen-releasing ability, argue against it. The ferrous/deoxygenated form exhibits a nitrite reductase activity and it could produce nitric oxide which in turn inhibits cellular respiration in response to hypoxia. In its ferrous/deoxygenated state, it may also exhibit GDI (Guanine nucleotide Dissociation Inhibitor) activity toward heterotrimeric G-alpha proteins, thereby regulating signal transduction to facilitate neuroprotective responses in the wake of hypoxia and associated oxidative stress. This chain is Neuroglobin, found in Oryctolagus cuniculus (Rabbit).